The chain runs to 33 residues: Protamine TP17 (33 aa).

The tract at residues 1-33 (MPRRRRSSSRPVRRRRRPRVSRRRRRRGRRRRR) is disordered.

In terms of tissue distribution, testis.

Its subcellular location is the nucleus. It is found in the chromosome. Protamines substitute for histones in the chromatin of sperm during the haploid phase of spermatogenesis. They compact sperm DNA into a highly condensed, stable and inactive complex. The sequence is that of Protamine TP17 from Oncorhynchus mykiss (Rainbow trout).